Reading from the N-terminus, the 430-residue chain is Adenylosuccinate synthetase (430 aa).

Residues 11 to 17 and 39 to 41 each bind GTP; these read GDEGKGK and GHT. Residue Asp-12 is the Proton acceptor of the active site. The Mg(2+) site is built by Asp-12 and Gly-39. IMP contacts are provided by residues 12-15, 37-40, Thr-130, Arg-144, Asn-226, Thr-241, and Arg-305; these read DEGK and NAGH. His-40 serves as the catalytic Proton donor. 301–307 provides a ligand contact to substrate; sequence VTTGRKR. GTP-binding positions include Arg-307, 333–335, and 415–417; these read KLD and GTG.

This sequence belongs to the adenylosuccinate synthetase family. As to quaternary structure, homodimer. Requires Mg(2+) as cofactor.

The protein resides in the cytoplasm. It carries out the reaction IMP + L-aspartate + GTP = N(6)-(1,2-dicarboxyethyl)-AMP + GDP + phosphate + 2 H(+). The protein operates within purine metabolism; AMP biosynthesis via de novo pathway; AMP from IMP: step 1/2. Functionally, plays an important role in the de novo pathway and in the salvage pathway of purine nucleotide biosynthesis. Catalyzes the first committed step in the biosynthesis of AMP from IMP. The sequence is that of Adenylosuccinate synthetase from Scheffersomyces stipitis (strain ATCC 58785 / CBS 6054 / NBRC 10063 / NRRL Y-11545) (Yeast).